The chain runs to 260 residues: Type III pantothenate kinase (260 aa).

6–13 (DVGNTNIT) contacts ATP. 107–110 (GADR) provides a ligand contact to substrate. The active-site Proton acceptor is the aspartate 109. Aspartate 129 is a K(+) binding site. Threonine 132 provides a ligand contact to ATP. Substrate is bound at residue threonine 184.

This sequence belongs to the type III pantothenate kinase family. Homodimer. NH4(+) is required as a cofactor. Requires K(+) as cofactor.

Its subcellular location is the cytoplasm. The enzyme catalyses (R)-pantothenate + ATP = (R)-4'-phosphopantothenate + ADP + H(+). The protein operates within cofactor biosynthesis; coenzyme A biosynthesis; CoA from (R)-pantothenate: step 1/5. Catalyzes the phosphorylation of pantothenate (Pan), the first step in CoA biosynthesis. In Agathobacter rectalis (strain ATCC 33656 / DSM 3377 / JCM 17463 / KCTC 5835 / VPI 0990) (Eubacterium rectale), this protein is Type III pantothenate kinase.